Reading from the N-terminus, the 149-residue chain is SsrA-binding protein (149 aa).

Positions Gly-121–His-149 are disordered. Over residues Lys-127 to Arg-142 the composition is skewed to basic and acidic residues.

Belongs to the SmpB family.

The protein localises to the cytoplasm. Its function is as follows. Required for rescue of stalled ribosomes mediated by trans-translation. Binds to transfer-messenger RNA (tmRNA), required for stable association of tmRNA with ribosomes. tmRNA and SmpB together mimic tRNA shape, replacing the anticodon stem-loop with SmpB. tmRNA is encoded by the ssrA gene; the 2 termini fold to resemble tRNA(Ala) and it encodes a 'tag peptide', a short internal open reading frame. During trans-translation Ala-aminoacylated tmRNA acts like a tRNA, entering the A-site of stalled ribosomes, displacing the stalled mRNA. The ribosome then switches to translate the ORF on the tmRNA; the nascent peptide is terminated with the 'tag peptide' encoded by the tmRNA and targeted for degradation. The ribosome is freed to recommence translation, which seems to be the essential function of trans-translation. This is SsrA-binding protein from Thiobacillus denitrificans (strain ATCC 25259 / T1).